Consider the following 221-residue polypeptide: Translation initiation factor 6 (221 aa).

The protein belongs to the eIF-6 family.

In terms of biological role, binds to the 50S ribosomal subunit and prevents its association with the 30S ribosomal subunit to form the 70S initiation complex. This chain is Translation initiation factor 6, found in Nitrosopumilus maritimus (strain SCM1).